Consider the following 282-residue polypeptide: tRNA (guanine-N(7)-)-methyltransferase (282 aa).

Residues 1–31 (MSLTDDQASKRQAYRAAKEANRKELKHVKID) form a disordered region. Positions 16–31 (AAKEANRKELKHVKID) are enriched in basic and acidic residues. S-adenosyl-L-methionine-binding positions include glycine 99, 122 to 123 (EI), 157 to 158 (NA), and cysteine 177. Aspartate 180 is a catalytic residue. Residue 255-257 (TEE) coordinates S-adenosyl-L-methionine.

Belongs to the class I-like SAM-binding methyltransferase superfamily. TrmB family. As to quaternary structure, forms a complex with TRM82.

It localises to the nucleus. The catalysed reaction is guanosine(46) in tRNA + S-adenosyl-L-methionine = N(7)-methylguanosine(46) in tRNA + S-adenosyl-L-homocysteine. The protein operates within tRNA modification; N(7)-methylguanine-tRNA biosynthesis. Its function is as follows. Catalyzes the formation of N(7)-methylguanine at position 46 (m7G46) in tRNA. The sequence is that of tRNA (guanine-N(7)-)-methyltransferase from Eremothecium gossypii (strain ATCC 10895 / CBS 109.51 / FGSC 9923 / NRRL Y-1056) (Yeast).